We begin with the raw amino-acid sequence, 385 residues long: 3-hydroxyisobutyryl-CoA hydrolase, mitochondrial (385 aa).

Residues Glu120, Gly145, Glu168, and Asp176 each coordinate substrate.

This sequence belongs to the enoyl-CoA hydratase/isomerase family.

Its subcellular location is the mitochondrion. The enzyme catalyses 3-hydroxy-2-methylpropanoyl-CoA + H2O = 3-hydroxy-2-methylpropanoate + CoA + H(+). The protein operates within amino-acid degradation; L-valine degradation. In terms of biological role, hydrolyzes 3-hydroxyisobutyryl-CoA (HIBYL-CoA), a saline catabolite. Has high activity toward isobutyryl-CoA. Could be an isobutyryl-CoA dehydrogenase that functions in valine catabolism. Also hydrolyzes 3-hydroxypropanoyl-CoA. In Xenopus laevis (African clawed frog), this protein is 3-hydroxyisobutyryl-CoA hydrolase, mitochondrial (hibch).